A 98-amino-acid polypeptide reads, in one-letter code: NADH-ubiquinone oxidoreductase chain 4L (98 aa).

Helical transmembrane passes span 1–21, 30–50, and 61–81; these read MSVV…GLLV, LLCL…TVLT, and IILL…LVMI.

It belongs to the complex I subunit 4L family. As to quaternary structure, core subunit of respiratory chain NADH dehydrogenase (Complex I) which is composed of 45 different subunits.

It is found in the mitochondrion inner membrane. It catalyses the reaction a ubiquinone + NADH + 5 H(+)(in) = a ubiquinol + NAD(+) + 4 H(+)(out). In terms of biological role, core subunit of the mitochondrial membrane respiratory chain NADH dehydrogenase (Complex I) which catalyzes electron transfer from NADH through the respiratory chain, using ubiquinone as an electron acceptor. Part of the enzyme membrane arm which is embedded in the lipid bilayer and involved in proton translocation. In Lontra canadensis (North American river otter), this protein is NADH-ubiquinone oxidoreductase chain 4L (MT-ND4L).